The chain runs to 771 residues: Protein lin-54 homolog (771 aa).

Disordered regions lie at residues 21-44 and 68-105; these read AMDE…SAQV and TNAK…IPSL. Over residues 72-92 the composition is skewed to low complexity; that stretch reads STTSSTTQLLLTPSSSSSTTT. Phosphoserine is present on residues Ser288, Ser292, and Ser308. The 114-residue stretch at 544 to 657 folds into the CRC domain; the sequence is PRKPCNCTRS…KCMGCKNFEE (114 aa). The interval 546–559 is DNA-binding; the sequence is KPCNCTRSQCLKLY. 9 residues coordinate Zn(2+): Cys548, Cys550, Cys555, Cys560, Cys562, Cys569, Cys572, Cys574, and Cys577. A linker region spans residues 606–619; sequence IGKGKEGESDRRHS. Residues Cys622, Cys624, Cys629, Cys634, Cys636, Cys643, Cys647, Cys649, and Cys652 each contribute to the Zn(2+) site. Residues 622-635 are DNA-binding; that stretch reads CNCKKSGCLKNYCE.

This sequence belongs to the lin-54 family. Component of the DREAM complex.

The protein resides in the nucleus. Its function is as follows. Component of the DREAM complex, a multiprotein complex that can both act as a transcription activator or repressor depending on the context. Specifically recognizes the consensus motif 5'-TTYRAA-3' in target DNA. The protein is Protein lin-54 homolog (lin54) of Danio rerio (Zebrafish).